The following is a 227-amino-acid chain: Casparian strip membrane protein 2 (227 aa).

At 1–59 (MSSTSEATVIHMDGAAGKTPATAVPPPPPPAPTAPVQQQRKAGGVPFLLRSGAEGFRRC) the chain is on the cytoplasmic side. Positions 17–37 (GKTPATAVPPPPPPAPTAPVQ) are disordered. The segment covering 23 to 33 (AVPPPPPPAPT) has biased composition (pro residues). The chain crosses the membrane as a helical span at residues 60–80 (MALLDLLLRVAAMGPTLAAAI). Residues 81–107 (STGTSDETLSVFTHYFQFRARFDDFSA) are Extracellular-facing. The helical transmembrane segment at 108 to 128 (FTFFMVANAVAAGYLLMSLPF) threads the bilayer. Topologically, residues 129-149 (SAFGVIRPKATSVRLLLLICD) are cytoplasmic. Residues 150–170 (TIMVVLVTAAASAAAAIVYVA) traverse the membrane as a helical segment. Topologically, residues 171 to 197 (HEGNRRANWVPICMQFHGFCKRTSGAV) are extracellular. The helical transmembrane segment at 198–218 (VASFLAVLIFILLVFLGACAI) threads the bilayer. Residues 219-227 (RRRHTTTKH) lie on the Cytoplasmic side of the membrane.

The protein belongs to the Casparian strip membrane proteins (CASP) family. As to quaternary structure, homodimer and heterodimers.

Its subcellular location is the cell membrane. Regulates membrane-cell wall junctions and localized cell wall deposition. Required for establishment of the Casparian strip membrane domain (CSD) and the subsequent formation of Casparian strips, a cell wall modification of the root endodermis that determines an apoplastic barrier between the intraorganismal apoplasm and the extraorganismal apoplasm and prevents lateral diffusion. The polypeptide is Casparian strip membrane protein 2 (Brachypodium distachyon (Purple false brome)).